We begin with the raw amino-acid sequence, 126 residues long: NADH-quinone oxidoreductase subunit A (126 aa).

The next 3 helical transmembrane spans lie at 14-34, 66-86, and 96-116; these read FLYFIFFSLFFCCFMLFTSWF, FYLIAIFFVIFDVEALYLYAW, and IGFVEATIFILFLLLSLFYLV.

Belongs to the complex I subunit 3 family. As to quaternary structure, NDH-1 is composed of 13 different subunits. Subunits NuoA, H, J, K, L, M, N constitute the membrane sector of the complex.

Its subcellular location is the cell membrane. It carries out the reaction a quinone + NADH + 5 H(+)(in) = a quinol + NAD(+) + 4 H(+)(out). In terms of biological role, NDH-1 shuttles electrons from NADH, via FMN and iron-sulfur (Fe-S) centers, to quinones in the respiratory chain. The immediate electron acceptor for the enzyme in this species is believed to be ubiquinone. Couples the redox reaction to proton translocation (for every two electrons transferred, four hydrogen ions are translocated across the cytoplasmic membrane), and thus conserves the redox energy in a proton gradient. The chain is NADH-quinone oxidoreductase subunit A from Buchnera aphidicola subsp. Schizaphis graminum (strain Sg).